The following is a 76-amino-acid chain: Large ribosomal subunit protein eL20 (76 aa).

This sequence belongs to the eukaryotic ribosomal protein eL20 family. As to quaternary structure, part of the 50S ribosomal subunit. Binds 23S rRNA.

The chain is Large ribosomal subunit protein eL20 from Methanococcus maripaludis (strain C7 / ATCC BAA-1331).